A 452-amino-acid chain; its full sequence is UDP-N-acetylmuramoylalanine--D-glutamate ligase (452 aa).

Residue Gly-115 to Thr-121 coordinates ATP.

This sequence belongs to the MurCDEF family.

The protein resides in the cytoplasm. The enzyme catalyses UDP-N-acetyl-alpha-D-muramoyl-L-alanine + D-glutamate + ATP = UDP-N-acetyl-alpha-D-muramoyl-L-alanyl-D-glutamate + ADP + phosphate + H(+). Its pathway is cell wall biogenesis; peptidoglycan biosynthesis. In terms of biological role, cell wall formation. Catalyzes the addition of glutamate to the nucleotide precursor UDP-N-acetylmuramoyl-L-alanine (UMA). The sequence is that of UDP-N-acetylmuramoylalanine--D-glutamate ligase from Citrifermentans bemidjiense (strain ATCC BAA-1014 / DSM 16622 / JCM 12645 / Bem) (Geobacter bemidjiensis).